The chain runs to 434 residues: Enolase (434 aa).

Gln165 is a (2R)-2-phosphoglycerate binding site. The Proton donor role is filled by Glu207. 3 residues coordinate Mg(2+): Asp244, Glu291, and Asp318. (2R)-2-phosphoglycerate is bound by residues Lys343, Arg372, Ser373, and Lys394. Lys343 serves as the catalytic Proton acceptor.

It belongs to the enolase family. It depends on Mg(2+) as a cofactor.

Its subcellular location is the cytoplasm. The protein resides in the secreted. It localises to the cell surface. It catalyses the reaction (2R)-2-phosphoglycerate = phosphoenolpyruvate + H2O. Its pathway is carbohydrate degradation; glycolysis; pyruvate from D-glyceraldehyde 3-phosphate: step 4/5. Functionally, catalyzes the reversible conversion of 2-phosphoglycerate (2-PG) into phosphoenolpyruvate (PEP). It is essential for the degradation of carbohydrates via glycolysis. The polypeptide is Enolase (Staphylococcus aureus (strain USA300 / TCH1516)).